The primary structure comprises 542 residues: POTE ankyrin domain family member C (542 aa).

ANK repeat units lie at residues 138–171 (EDLD…KRDK), 172–201 (QKRT…QLNV), 205–234 (KKRT…DQNI), 238–267 (YGNT…DIES), 271–300 (CGLT…NLNA), 304–333 (YGRT…DVSS), and 337–373 (SGQT…SENS). The disordered stretch occupies residues 369 to 494 (SSENSNPEQD…NTGISQDEIL (126 aa)). Basic and acidic residues-rich tracts occupy residues 377–392 (QDLK…RLKV), 401–412 (MSQEPEINKDCD), and 466–481 (EEYH…KQLS). The segment covering 482–494 (EEQNTGISQDEIL) has biased composition (polar residues). Residues 489 to 538 (SQDEILTNKQKQIEVAEKKMNSELSLSHKKEEDLLRENSMLQEEIAMLIS) adopt a coiled-coil conformation.

This sequence belongs to the POTE family. As to expression, expressed in prostate and testis.

The polypeptide is POTE ankyrin domain family member C (POTEC) (Homo sapiens (Human)).